The chain runs to 265 residues: Protein Msed_2121 (265 aa).

It belongs to the CinA family.

This is Protein Msed_2121 from Metallosphaera sedula (strain ATCC 51363 / DSM 5348 / JCM 9185 / NBRC 15509 / TH2).